Consider the following 77-residue polypeptide: Putative snRNP Sm-like protein (77 aa).

Residues 4–76 (RPLDVLNRSL…VVFVSPAPGG (73 aa)) form the Sm domain.

The protein belongs to the snRNP Sm proteins family.

This is Putative snRNP Sm-like protein from Archaeoglobus fulgidus (strain ATCC 49558 / DSM 4304 / JCM 9628 / NBRC 100126 / VC-16).